Here is a 283-residue protein sequence, read N- to C-terminus: Phosphatidylserine decarboxylase proenzyme (283 aa).

Active-site charge relay system; for autoendoproteolytic cleavage activity residues include D88, H145, and S248. The Schiff-base intermediate with substrate; via pyruvic acid; for decarboxylase activity role is filled by S248. S248 is subject to Pyruvic acid (Ser); by autocatalysis.

This sequence belongs to the phosphatidylserine decarboxylase family. PSD-B subfamily. Prokaryotic type I sub-subfamily. In terms of assembly, heterodimer of a large membrane-associated beta subunit and a small pyruvoyl-containing alpha subunit. Pyruvate serves as cofactor. Is synthesized initially as an inactive proenzyme. Formation of the active enzyme involves a self-maturation process in which the active site pyruvoyl group is generated from an internal serine residue via an autocatalytic post-translational modification. Two non-identical subunits are generated from the proenzyme in this reaction, and the pyruvate is formed at the N-terminus of the alpha chain, which is derived from the carboxyl end of the proenzyme. The autoendoproteolytic cleavage occurs by a canonical serine protease mechanism, in which the side chain hydroxyl group of the serine supplies its oxygen atom to form the C-terminus of the beta chain, while the remainder of the serine residue undergoes an oxidative deamination to produce ammonia and the pyruvoyl prosthetic group on the alpha chain. During this reaction, the Ser that is part of the protease active site of the proenzyme becomes the pyruvoyl prosthetic group, which constitutes an essential element of the active site of the mature decarboxylase.

Its subcellular location is the cell membrane. The catalysed reaction is a 1,2-diacyl-sn-glycero-3-phospho-L-serine + H(+) = a 1,2-diacyl-sn-glycero-3-phosphoethanolamine + CO2. It functions in the pathway phospholipid metabolism; phosphatidylethanolamine biosynthesis; phosphatidylethanolamine from CDP-diacylglycerol: step 2/2. Functionally, catalyzes the formation of phosphatidylethanolamine (PtdEtn) from phosphatidylserine (PtdSer). This is Phosphatidylserine decarboxylase proenzyme from Methylibium petroleiphilum (strain ATCC BAA-1232 / LMG 22953 / PM1).